Reading from the N-terminus, the 1139-residue chain is Solute carrier family 12 member 5 (1139 aa).

Disordered stretches follow at residues 1-63 (MSRR…GKEY) and 92-116 (TNLP…KPVQ). The Cytoplasmic segment spans residues 1–98 (MSRRFTVTSL…ANYTNLPQGS (98 aa)). The segment covering 19–45 (PDPESRRHSVADPRHLPGEDVKGDGNP) has biased composition (basic and acidic residues). The segment covering 46-55 (KESSPFINST) has biased composition (polar residues). Position 57 is a phosphothreonine (Thr-57). The span at 98–111 (SREHEEAENNEGGK) shows a compositional bias: basic and acidic residues. Residues 99 to 120 (REHEEAENNEGGKKKPVQAPRM) traverse the membrane as a discontinuously helical segment. K(+) is bound at residue Lys-113. At 121–129 (GTFMGVYLP) the chain is on the extracellular side. Residues 130-151 (CLQNIFGVILFLRLTWVVGIAG) traverse the membrane as a helical segment. The Cytoplasmic segment spans residues 152 to 174 (IMESFCMVFICCSCTMLTAISMS). The helical transmembrane segment at 175–203 (AIATNGVVPAGGSYYMISRSLGPEFGGAV) threads the bilayer. A chloride-binding site is contributed by Ala-184. At 204-229 (GLCFYLGTTFAGAMYILGTIEILLAY) the chain is on the extracellular side. 2 helical membrane-spanning segments follow: residues 230 to 250 (LFPA…AAML) and 251 to 276 (NNMR…KYVN). Over 277–402 (KFALVFLGCV…ERSGMTSVGL (126 aa)) the chain is Extracellular. A disulfide bond links Cys-310 and Cys-325. Asn-314, Asn-333, Asn-351, and Asn-362 each carry an N-linked (GlcNAc...) asparagine glycan. Cysteines 345 and 354 form a disulfide. The chain crosses the membrane as a helical span at residues 403–420 (ADGTPIDMDHPYVFSDMT). Met-410 serves as a coordination point for K(+). Residues Tyr-414 and Val-415 each contribute to the chloride site. The Cytoplasmic portion of the chain corresponds to 421–429 (SYFTLLVGI). Residues 430–453 (YFPSVTGIMAGSNRSGDLRDAQKS) traverse the membrane as a helical segment. Asp-446 provides a ligand contact to K(+). Residues 454 to 485 (IPTGTILAIATTSAVYISSVVLFGACIEGVVL) are Extracellular-facing. Residues 486 to 513 (RDKFGEAVNGNLVVGTLAWPSPWVIVIG) traverse the membrane as a helical segment. Topologically, residues 514–534 (SFFSTCGAGLQSLTGAPRLLQ) are cytoplasmic. Transmembrane regions (helical) follow at residues 535-555 (AISR…KANG) and 556-578 (EPTW…ASLD). Chloride is bound at residue Glu-569. Residues 579–592 (EVAPILSMFFLMCY) are Cytoplasmic-facing. Transmembrane regions (helical) follow at residues 593–615 (MFVN…PRFR) and 616–632 (YYHW…CLAL). The Cytoplasmic segment spans residues 633–1139 (MFICSWYYAL…GGREVITIYS (507 aa)). A scissor helix region spans residues 667 to 681 (GIRGLSLSAARYALL). Phosphothreonine; by OXSR1 and STK39 is present on Thr-929. Positions 942 to 1052 (MHLTKNERER…GPSPVSSEGI (111 aa)) are disordered. Positions 945-962 (TKNEREREIQSITDESRG) are enriched in basic and acidic residues. A compositionally biased stretch (acidic residues) spans 982-994 (TAGDSEEKPEEEV). The span at 1003–1012 (PSCPSSSPSP) shows a compositional bias: low complexity. Positions 1023 to 1042 (DPEKVHLTWTKDKSVAEKNK) are enriched in basic and acidic residues. Position 1030 is a phosphothreonine; by OXSR1 and STK39 (Thr-1030). 3 positions are modified to phosphoserine: Ser-1045, Ser-1048, and Ser-1049.

The protein belongs to the SLC12A transporter family. K/Cl co-transporter subfamily. In terms of assembly, homodimer; adopts a domain-swap conformation at the scissor helices connecting the transmembrane domain and C-terminal domain. Heterodimer with K-Cl cotransporters SLC12A6 and SLC12A7. Interacts with AP2A1. In terms of processing, phosphorylated at Thr-929 and Thr-1030 by OXSR1/OSR1 and STK39/SPAK downstream of WNK kinases (WNK1, WNK2, WNK3 or WNK4), inhibiting the potassium-chloride cotransport activity. Brain specific. Detected in neuronal cells.

It is found in the cell membrane. The protein resides in the cell projection. It localises to the dendrite. It catalyses the reaction K(+)(in) + chloride(in) = K(+)(out) + chloride(out). With respect to regulation, inhibited following phosphorylation by OXSR1/OSR1 and STK39/SPAK: phosphorylation takes place downstream of WNK kinases (WNK1, WNK2, WNK3 or WNK4) in response to hyperosmotic stress and subsequent cell shrinkage. Functionally, mediates electroneutral potassium-chloride cotransport in mature neurons and is required for neuronal Cl(-) homeostasis. As major extruder of intracellular chloride, it establishes the low neuronal Cl(-) levels required for chloride influx after binding of GABA-A and glycine to their receptors, with subsequent hyperpolarization and neuronal inhibition. Involved in the regulation of dendritic spine formation and maturation. The protein is Solute carrier family 12 member 5 of Homo sapiens (Human).